The sequence spans 193 residues: MSLLSVIFIALGLSADCFAVSIGIACTHASIKSRVIWRVAGTFGLFQAGMVVIGFFAGLSVIDIISAFDHWIAFGLLLFIGVRMIYEALQGEDDQELVKLDLTRGLGLLGVAVATSIDALAVGLAFAVEETNIGLAALLIGLVSLTVSFLGFKLGNRISFMASRWVGVAGGLVLVFIGLKILAEHTLGWDILL.

6 helical membrane passes run V6–C26, A48–F68, W71–G91, L108–V128, N132–F152, and W165–H185.

Belongs to the MntP (TC 9.B.29) family.

It is found in the cell membrane. Its function is as follows. Probably functions as a manganese efflux pump. This chain is Putative manganese efflux pump MntP, found in Dehalococcoides mccartyi (strain ATCC BAA-2100 / JCM 16839 / KCTC 5957 / BAV1).